A 122-amino-acid chain; its full sequence is Large ribosomal subunit protein uL14 (122 aa).

This sequence belongs to the universal ribosomal protein uL14 family. Part of the 50S ribosomal subunit. Forms a cluster with proteins L3 and L19. In the 70S ribosome, L14 and L19 interact and together make contacts with the 16S rRNA in bridges B5 and B8.

Binds to 23S rRNA. Forms part of two intersubunit bridges in the 70S ribosome. This is Large ribosomal subunit protein uL14 from Citrifermentans bemidjiense (strain ATCC BAA-1014 / DSM 16622 / JCM 12645 / Bem) (Geobacter bemidjiensis).